Reading from the N-terminus, the 734-residue chain is Threonine--tRNA ligase, cytoplasmic (734 aa).

Residues 1 to 41 (MSASEAGVTEQVKKLSVKDSSNDAVKPNKKENKKSKQQSLY) are disordered. Residues 11-30 (QVKKLSVKDSSNDAVKPNKK) are compositionally biased toward basic and acidic residues. One can recognise a TGS domain in the interval 69–135 (SMPRVPLKIV…EGEANEEIKL (67 aa)). A phosphoserine mark is found at S195 and S289. A phosphothreonine mark is found at T297 and T381. S453 and S457 each carry phosphoserine. T460 carries the phosphothreonine modification. S605 is subject to Phosphoserine.

Belongs to the class-II aminoacyl-tRNA synthetase family.

The protein resides in the cytoplasm. The enzyme catalyses tRNA(Thr) + L-threonine + ATP = L-threonyl-tRNA(Thr) + AMP + diphosphate + H(+). This Saccharomyces cerevisiae (strain ATCC 204508 / S288c) (Baker's yeast) protein is Threonine--tRNA ligase, cytoplasmic (THS1).